A 554-amino-acid polypeptide reads, in one-letter code: Wee1-like protein kinase 2-C (554 aa).

Disordered regions lie at residues 1–86 (MRTA…GGEC) and 145–183 (TLVN…SQMK). Polar residues-rich tracts occupy residues 38 to 48 (SPVSSWRTNNC) and 147 to 163 (VNVN…THFQ). The Protein kinase domain occupies 213–487 (FLEIEKIGAG…AKNSVLRRCV (275 aa)). ATP contacts are provided by residues 219–227 (IGAGEFGSV) and K242. D340 serves as the catalytic Proton acceptor. Residues N345 and D377 each coordinate Mg(2+). A coiled-coil region spans residues 490-516 (AAELQKQLNVEKFKTAMLERELQAAKL).

It belongs to the protein kinase superfamily. Ser/Thr protein kinase family. WEE1 subfamily.

It localises to the nucleus. It carries out the reaction L-tyrosyl-[protein] + ATP = O-phospho-L-tyrosyl-[protein] + ADP + H(+). Protein tyrosine kinase that phosphorylates and inhibits cdk1 and acts as a regulator of meiosis in oocytes. Required to ensure the meiotic cell cycle in oocytes by phosphorylating cdk1 at 'Tyr-15', leading to inhibit cdk1 activity and prevent meiosis. The sequence is that of Wee1-like protein kinase 2-C (wee2-c) from Xenopus laevis (African clawed frog).